A 243-amino-acid polypeptide reads, in one-letter code: Venom nerve growth factor (243 aa).

The N-terminal stretch at 1–18 (MSMLCYTLIIVFLIGIWA) is a signal peptide. The propeptide occupies 19–125 (APKSEDNVPL…TLNRNIRAKR (107 aa)). The span at 47-66 (GLKTSRNTDQRHPAPKKAED) shows a compositional bias: basic and acidic residues. The segment at 47–69 (GLKTSRNTDQRHPAPKKAEDQEL) is disordered. 3 disulfides stabilise this stretch: Cys139–Cys204, Cys182–Cys232, and Cys192–Cys234. Residue Asn148 is glycosylated (N-linked (GlcNAc...) asparagine).

Belongs to the NGF-beta family. Homodimer; non-covalently linked. In terms of tissue distribution, expressed by the venom gland.

It is found in the secreted. Functionally, nerve growth factor is important for the development and maintenance of the sympathetic and sensory nervous systems. It stimulates division and differentiation of sympathetic and embryonic sensory neurons as well as basal forebrain cholinergic neurons in the brain. Its relevance in the snake venom is not clear. However, it has been shown to inhibit metalloproteinase-dependent proteolysis of platelet glycoprotein Ib alpha, suggesting a metalloproteinase inhibition to prevent metalloprotease autodigestion and/or protection against prey proteases. Binds a lipid between the two protein chains in the homodimer. The lipid-bound form promotes histamine relase from mouse mast cells, contrary to the lipid-free form. The sequence is that of Venom nerve growth factor from Oxyuranus scutellatus scutellatus (Australian taipan).